The sequence spans 616 residues: Chaperone protein HscA (616 aa).

The protein belongs to the heat shock protein 70 family.

In terms of biological role, chaperone involved in the maturation of iron-sulfur cluster-containing proteins. Has a low intrinsic ATPase activity which is markedly stimulated by HscB. Involved in the maturation of IscU. The polypeptide is Chaperone protein HscA (Klebsiella pneumoniae subsp. pneumoniae (strain ATCC 700721 / MGH 78578)).